The following is a 274-amino-acid chain: Cytochrome c oxidase subunit 3 (274 aa).

Transmembrane regions (helical) follow at residues 22–42 (PSPWPLGASVACLILTLGGVM), 47–67 (FAAGDIGLPLGLILVLASMLL), 93–113 (GVVLFIVSEILLFFSLFWAFF), 137–157 (PFEVPLLNTIILLTSGCTITV), 170–190 (TILYLILTILLAWMFLGLQWV), 208–228 (FFVATGFHGLHVMIGTIFLTV), and 248–268 (AAIWYWHVVDVIWLFLYVSVY).

It belongs to the cytochrome c oxidase subunit 3 family. As to quaternary structure, component of the cytochrome c oxidase (complex IV, CIV), a multisubunit enzyme composed of a catalytic core of 3 subunits and several supernumerary subunits. The complex exists as a monomer or a dimer and forms supercomplexes (SCs) in the inner mitochondrial membrane with ubiquinol-cytochrome c oxidoreductase (cytochrome b-c1 complex, complex III, CIII).

It localises to the mitochondrion inner membrane. It catalyses the reaction 4 Fe(II)-[cytochrome c] + O2 + 8 H(+)(in) = 4 Fe(III)-[cytochrome c] + 2 H2O + 4 H(+)(out). In terms of biological role, component of the cytochrome c oxidase, the last enzyme in the mitochondrial electron transport chain which drives oxidative phosphorylation. The respiratory chain contains 3 multisubunit complexes succinate dehydrogenase (complex II, CII), ubiquinol-cytochrome c oxidoreductase (cytochrome b-c1 complex, complex III, CIII) and cytochrome c oxidase (complex IV, CIV), that cooperate to transfer electrons derived from NADH and succinate to molecular oxygen, creating an electrochemical gradient over the inner membrane that drives transmembrane transport and the ATP synthase. Cytochrome c oxidase is the component of the respiratory chain that catalyzes the reduction of oxygen to water. Electrons originating from reduced cytochrome c in the intermembrane space (IMS) are transferred via the dinuclear copper A center (CU(A)) of subunit 2 and heme A of subunit 1 to the active site in subunit 1, a binuclear center (BNC) formed by heme A3 and copper B (CU(B)). The BNC reduces molecular oxygen to 2 water molecules using 4 electrons from cytochrome c in the IMS and 4 protons from the mitochondrial matrix. The polypeptide is Cytochrome c oxidase subunit 3 (COX3) (Allomyces macrogynus).